Reading from the N-terminus, the 406-residue chain is Tryptophan synthase beta chain (406 aa).

N6-(pyridoxal phosphate)lysine is present on lysine 99.

It belongs to the TrpB family. In terms of assembly, tetramer of two alpha and two beta chains. Requires pyridoxal 5'-phosphate as cofactor.

It carries out the reaction (1S,2R)-1-C-(indol-3-yl)glycerol 3-phosphate + L-serine = D-glyceraldehyde 3-phosphate + L-tryptophan + H2O. The protein operates within amino-acid biosynthesis; L-tryptophan biosynthesis; L-tryptophan from chorismate: step 5/5. The beta subunit is responsible for the synthesis of L-tryptophan from indole and L-serine. The polypeptide is Tryptophan synthase beta chain (Rhizobium meliloti (strain 1021) (Ensifer meliloti)).